Reading from the N-terminus, the 360-residue chain is Chorismate synthase (360 aa).

R46 is an NADP(+) binding site. Residues 122–124, G282, 297–301, and R324 contribute to the FMN site; these read RAS and KPTPS.

Belongs to the chorismate synthase family. FMNH2 is required as a cofactor.

The enzyme catalyses 5-O-(1-carboxyvinyl)-3-phosphoshikimate = chorismate + phosphate. Its pathway is metabolic intermediate biosynthesis; chorismate biosynthesis; chorismate from D-erythrose 4-phosphate and phosphoenolpyruvate: step 7/7. Catalyzes the anti-1,4-elimination of the C-3 phosphate and the C-6 proR hydrogen from 5-enolpyruvylshikimate-3-phosphate (EPSP) to yield chorismate, which is the branch point compound that serves as the starting substrate for the three terminal pathways of aromatic amino acid biosynthesis. This reaction introduces a second double bond into the aromatic ring system. This chain is Chorismate synthase, found in Archaeoglobus fulgidus (strain ATCC 49558 / DSM 4304 / JCM 9628 / NBRC 100126 / VC-16).